The primary structure comprises 156 residues: Ribosomal RNA large subunit methyltransferase H (156 aa).

Residues L73, G104, and 123-128 (LSSLTL) contribute to the S-adenosyl-L-methionine site.

Belongs to the RNA methyltransferase RlmH family. In terms of assembly, homodimer.

It is found in the cytoplasm. The enzyme catalyses pseudouridine(1915) in 23S rRNA + S-adenosyl-L-methionine = N(3)-methylpseudouridine(1915) in 23S rRNA + S-adenosyl-L-homocysteine + H(+). In terms of biological role, specifically methylates the pseudouridine at position 1915 (m3Psi1915) in 23S rRNA. The chain is Ribosomal RNA large subunit methyltransferase H from Neisseria gonorrhoeae (strain NCCP11945).